Reading from the N-terminus, the 1197-residue chain is ATP-dependent helicase/nuclease subunit A (1197 aa).

The UvrD-like helicase ATP-binding domain maps to 2–458 (RQWTKEQQAA…IDLAKNFRSR (457 aa)). 23-30 (AAAGSGKT) contributes to the ATP binding site. The 290-residue stretch at 485 to 774 (RAALYQGTEF…RIMSIHKSKG (290 aa)) folds into the UvrD-like helicase C-terminal domain.

Belongs to the helicase family. AddA subfamily. As to quaternary structure, heterodimer of AddA and AddB/RexB. Mg(2+) is required as a cofactor.

The catalysed reaction is Couples ATP hydrolysis with the unwinding of duplex DNA by translocating in the 3'-5' direction.. The enzyme catalyses ATP + H2O = ADP + phosphate + H(+). Functionally, the heterodimer acts as both an ATP-dependent DNA helicase and an ATP-dependent, dual-direction single-stranded exonuclease. Recognizes the chi site generating a DNA molecule suitable for the initiation of homologous recombination. The AddA nuclease domain is required for chi fragment generation; this subunit has the helicase and 3' -&gt; 5' nuclease activities. The polypeptide is ATP-dependent helicase/nuclease subunit A (Alkaliphilus oremlandii (strain OhILAs) (Clostridium oremlandii (strain OhILAs))).